The sequence spans 366 residues: Chorismate synthase (366 aa).

Positions 48 and 54 each coordinate NADP(+). Residues 125 to 127, 238 to 239, G278, 293 to 297, and R319 contribute to the FMN site; these read RSS, NA, and KPTSS.

It belongs to the chorismate synthase family. As to quaternary structure, homotetramer. It depends on FMNH2 as a cofactor.

It carries out the reaction 5-O-(1-carboxyvinyl)-3-phosphoshikimate = chorismate + phosphate. It participates in metabolic intermediate biosynthesis; chorismate biosynthesis; chorismate from D-erythrose 4-phosphate and phosphoenolpyruvate: step 7/7. Its function is as follows. Catalyzes the anti-1,4-elimination of the C-3 phosphate and the C-6 proR hydrogen from 5-enolpyruvylshikimate-3-phosphate (EPSP) to yield chorismate, which is the branch point compound that serves as the starting substrate for the three terminal pathways of aromatic amino acid biosynthesis. This reaction introduces a second double bond into the aromatic ring system. This Burkholderia vietnamiensis (strain G4 / LMG 22486) (Burkholderia cepacia (strain R1808)) protein is Chorismate synthase.